The following is a 544-amino-acid chain: MSSPGPSQPPAEDPPWPARLLRAPLGLLRLDPSGGALLLCGLVALLGWSWLRRRRARGIPPGPTPWPLVGNFGHVLLPPFLRRRSWLSSRTRAAGIDPSVIGPQVLLAHLARVYGSIFSFFIGHYLVVVLSDFHSVREALVQQAEVFSDRPRVPLISIVTKEKGVVFAHYGPVWRQQRKFSHSTLRHFGLGKLSLEPKIIEEFKYVKAEMQKHGEDPFCPFSIISNAVSNIICSLCFGQRFDYTNSEFKKMLGFMSRGLEICLNSQVLLVNICPWLYYLPFGPFKELRQIEKDITSFLKKIIKDHQESLDRENPQDFIDMYLLHMEEERKNNSNSSFDEEYLFYIIGDLFIAGTDTTTNSLLWCLLYMSLNPDVQEKVHEEIERVIGANRAPSLTDKAQMPYTEATIMEVQRLTVVVPLAIPHMTSENTVLQGYTIPKGTLILPNLWSVHRDPAIWEKPEDFYPNRFLDDQGQLIKKETFIPFGIGKRVCMGEQLAKMELFLMFVSLMQSFAFALPEDSKKPLLTGRFGLTLAPHPFNITISRR.

A run of 4 helical transmembrane segments spans residues Leu30–Trp50, Val113–Phe133, Ile261–Phe281, and Leu342–Leu362. Cys490 serves as a coordination point for heme. The chain crosses the membrane as a helical span at residues Leu495–Leu515.

The protein belongs to the cytochrome P450 family. Heme is required as a cofactor. Widely expressed with stronger expression in thymus, heart and cerebellum.

Its subcellular location is the endoplasmic reticulum membrane. It is found in the microsome membrane. It localises to the mitochondrion inner membrane. It carries out the reaction an omega-methyl-long-chain fatty acid + reduced [NADPH--hemoprotein reductase] + O2 = an omega-hydroxy-long-chain fatty acid + oxidized [NADPH--hemoprotein reductase] + H2O + H(+). It catalyses the reaction (5Z,8Z,11Z,14Z)-eicosatetraenoate + reduced [NADPH--hemoprotein reductase] + O2 = 19-hydroxy-(5Z,8Z,11Z,14Z)-eicosatetraenoate + oxidized [NADPH--hemoprotein reductase] + H2O + H(+). The catalysed reaction is (5Z,8Z,11Z,14Z)-eicosatetraenoate + reduced [NADPH--hemoprotein reductase] + O2 = 20-hydroxy-(5Z,8Z,11Z,14Z)-eicosatetraenoate + oxidized [NADPH--hemoprotein reductase] + H2O + H(+). The enzyme catalyses N-[(5Z,8Z,11Z,14Z)-eicosatetraenoyl]-serotonin + reduced [NADPH--hemoprotein reductase] + O2 = 2-oxo-N-[(5Z,8Z,11Z,14Z)-eicosatetraenoyl]-serotonin + oxidized [NADPH--hemoprotein reductase] + H2O + H(+). It functions in the pathway lipid metabolism; arachidonate metabolism. In terms of biological role, a cytochrome P450 monooxygenase involved in the metabolism of arachidonic acid and its conjugates. Mechanistically, uses molecular oxygen inserting one oxygen atom into a substrate, and reducing the second into a water molecule, with two electrons provided by NADPH via cytochrome P450 reductase (CPR; NADPH-ferrihemoprotein reductase). Acts as an omega and omega-1 hydroxylase for arachidonic acid and possibly for other long chain fatty acids. May modulate the arachidonic acid signaling pathway and play a role in other fatty acid signaling processes. May down-regulate the biological activities of N-arachidonoyl-serotonin, an endocannabinoid that has anti-nociceptive effects through inhibition of fatty acid amide hydrolase FAAH, TRPV1 receptor and T-type calcium channels. Catalyzes C-2 oxidation of the indole ring of N-arachidonoyl-serotonin forming a less active product 2-oxo-N-arachidonoyl-serotonin. This is Cytochrome P450 2U1 from Homo sapiens (Human).